The primary structure comprises 257 residues: Deoxyribose-phosphate aldolase (257 aa).

Catalysis depends on D102, which acts as the Proton donor/acceptor. K166 (schiff-base intermediate with acetaldehyde) is an active-site residue. K198 (proton donor/acceptor) is an active-site residue.

The protein belongs to the DeoC/FbaB aldolase family. DeoC type 2 subfamily.

Its subcellular location is the cytoplasm. The catalysed reaction is 2-deoxy-D-ribose 5-phosphate = D-glyceraldehyde 3-phosphate + acetaldehyde. Its pathway is carbohydrate degradation; 2-deoxy-D-ribose 1-phosphate degradation; D-glyceraldehyde 3-phosphate and acetaldehyde from 2-deoxy-alpha-D-ribose 1-phosphate: step 2/2. Catalyzes a reversible aldol reaction between acetaldehyde and D-glyceraldehyde 3-phosphate to generate 2-deoxy-D-ribose 5-phosphate. The protein is Deoxyribose-phosphate aldolase of Shewanella halifaxensis (strain HAW-EB4).